A 301-amino-acid chain; its full sequence is GTPase Era (301 aa).

In terms of domain architecture, Era-type G spans 4-173 (KAGFVALIGK…LECISKYLSP (170 aa)). A G1 region spans residues 12-19 (GKPNAGKS). A GTP-binding site is contributed by 12–19 (GKPNAGKS). A G2 region spans residues 38–42 (NATRK). The segment at 64–67 (DTPG) is G3. Residues 64 to 68 (DTPGL) and 122 to 125 (SKID) each bind GTP. The G4 stretch occupies residues 122 to 125 (SKID). The segment at 152–154 (LSA) is G5. The KH type-2 domain occupies 204 to 280 (LSDEIPYESD…FLNLQVIAQK (77 aa)).

This sequence belongs to the TRAFAC class TrmE-Era-EngA-EngB-Septin-like GTPase superfamily. Era GTPase family. In terms of assembly, monomer.

The protein resides in the cytoplasm. It is found in the cell inner membrane. Functionally, an essential GTPase that binds both GDP and GTP, with rapid nucleotide exchange. Plays a role in 16S rRNA processing and 30S ribosomal subunit biogenesis and possibly also in cell cycle regulation and energy metabolism. The chain is GTPase Era from Helicobacter pylori (strain G27).